A 381-amino-acid polypeptide reads, in one-letter code: MLKSQLQQQLKKLKDNNLYRFLRKNNSYNNKNYLDFSSNDYLCLSTNKEIIDAIKEGGLKYGFGSTGSRLTAGDINHQLLEHKIAEFKGTERSLIYSSGYATNVGVISALCKKGDLILSDKLNHASIIDGCKLSKSAVLIYNHCDMDNLIDLIEKNRSSYNNLFIITDGVFSMDGDIAPLDKLKKIADEYNGILIIDDAHGTGVLGNGKGSLKHFNLKPSDNIIQIGTMSKAVGGLGGFVCGIEEVIEYLINTSRSFIYSTSLPPSVVSGCIKSFELIEEGAPTKKLQKNIGLANKIFKEHNLIEENNLTPIYPFIFKEKTMDIAEQLIKNNIFCVGIRYPTVPKGMERLRVSITVGHSEEDFRVLCERINLIIKKKFKGI.

R20 contributes to the substrate binding site. G99 to Y100 serves as a coordination point for pyridoxal 5'-phosphate. H124 serves as a coordination point for substrate. Residues S172, D197–H200, and T228–K231 contribute to the pyridoxal 5'-phosphate site. Residue K231 is modified to N6-(pyridoxal phosphate)lysine. Residue T342 participates in substrate binding.

It belongs to the class-II pyridoxal-phosphate-dependent aminotransferase family. BioF subfamily. As to quaternary structure, homodimer. Pyridoxal 5'-phosphate is required as a cofactor.

It carries out the reaction 6-carboxyhexanoyl-[ACP] + L-alanine + H(+) = (8S)-8-amino-7-oxononanoate + holo-[ACP] + CO2. The protein operates within cofactor biosynthesis; biotin biosynthesis. Catalyzes the decarboxylative condensation of pimeloyl-[acyl-carrier protein] and L-alanine to produce 8-amino-7-oxononanoate (AON), [acyl-carrier protein], and carbon dioxide. The protein is Putative 8-amino-7-oxononanoate synthase (bioF) of Methanococcus aeolicus (strain ATCC BAA-1280 / DSM 17508 / OCM 812 / Nankai-3).